The chain runs to 470 residues: Nitric oxide synthase, inducible (470 aa).

L-arginine contacts are provided by W2, Y3, and E7. Positions 11, 93, and 106 each coordinate (6R)-L-erythro-5,6,7,8-tetrahydrobiopterin. Position 121 (Y121) interacts with heme b. The calmodulin-binding stretch occupies residues 145–165 (FKAVARAALFSSTLMSRVLAN). The Flavodoxin-like domain maps to 169–307 (CTVLYATETG…AFSAWALTAL (139 aa)). FMN contacts are provided by T175, E176, T177, K179, S180, S221, T222, S258, C265, E291, and Q295. Residue R380 coordinates NADP(+). H403 lines the FAD pocket. An NADP(+)-binding site is contributed by T440.

This sequence belongs to the NOS family. As to quaternary structure, homodimer. Requires heme b as cofactor. It depends on FAD as a cofactor. FMN serves as cofactor. The cofactor is (6R)-L-erythro-5,6,7,8-tetrahydrobiopterin.

The protein localises to the cytoplasm. The protein resides in the cytosol. The catalysed reaction is 2 L-arginine + 3 NADPH + 4 O2 + H(+) = 2 L-citrulline + 2 nitric oxide + 3 NADP(+) + 4 H2O. Not stimulated by calcium/calmodulin. Its function is as follows. Produces nitric oxide (NO) which is a messenger molecule with diverse functions throughout the body. In macrophages, NO mediates tumoricidal and bactericidal actions. Also has nitrosylase activity and mediates cysteine S-nitrosylation of cytoplasmic target proteins such COX2. The polypeptide is Nitric oxide synthase, inducible (nos2) (Oncorhynchus mykiss (Rainbow trout)).